A 363-amino-acid chain; its full sequence is MNPKTYEALETMQKRVDQIDKDLQSEEIVSDVKKMLELNKERANLIEVVEKFIEYKTIIQSIADAKEILGNEKDAEMIELAKMELSENEDAVEPIVAIIEELLLPKDPNDDKNVIVEIRGAAGGDEANIFAGDLLRMYKLYAETQNWKITMLDANSSEAGGFSQVSFMVKGDRVYSKLKFESGAHRVQRVPKTEAKGRIQTSTATVAVLPEMSDVEIEIKNSDLRIDTYRSSGAGGQHVNTTDSAVRITHIPTGVVAASQDGRSQHDNKDIAMTMLRARIYEAELEKQQAEADATRKNAVGTGARSEKIRTYNYPQNRVTDHRVGLTLNKLDQVMEGKIDDFIIALVNDEQRQKVEAQLQDNE.

Gln237 carries the post-translational modification N5-methylglutamine.

The protein belongs to the prokaryotic/mitochondrial release factor family. In terms of processing, methylated by PrmC. Methylation increases the termination efficiency of RF1.

It localises to the cytoplasm. In terms of biological role, peptide chain release factor 1 directs the termination of translation in response to the peptide chain termination codons UAG and UAA. The sequence is that of Peptide chain release factor 1 from Mesoplasma florum (strain ATCC 33453 / NBRC 100688 / NCTC 11704 / L1) (Acholeplasma florum).